Consider the following 156-residue polypeptide: Ribosomal RNA large subunit methyltransferase H (156 aa).

S-adenosyl-L-methionine is bound by residues L73, G104, and 123 to 128 (LSSLTL).

It belongs to the RNA methyltransferase RlmH family. As to quaternary structure, homodimer.

It is found in the cytoplasm. The enzyme catalyses pseudouridine(1915) in 23S rRNA + S-adenosyl-L-methionine = N(3)-methylpseudouridine(1915) in 23S rRNA + S-adenosyl-L-homocysteine + H(+). Specifically methylates the pseudouridine at position 1915 (m3Psi1915) in 23S rRNA. This is Ribosomal RNA large subunit methyltransferase H from Neisseria meningitidis serogroup C / serotype 2a (strain ATCC 700532 / DSM 15464 / FAM18).